A 133-amino-acid chain; its full sequence is Large ribosomal subunit protein uL14m (133 aa).

It belongs to the universal ribosomal protein uL14 family. As to quaternary structure, probably part of the large ribosomal subunit.

It is found in the hydrogenosome. This chain is Large ribosomal subunit protein uL14m (rpl14), found in Nyctotherus ovalis.